The primary structure comprises 921 residues: Collagen alpha-1(IX) chain (921 aa).

A signal peptide spans 1 to 23 (MKTCWKIPVFFFVCSFLEPWASA). The segment at 24–268 (AVKRRPRFPV…ITPSQTTDER (245 aa)) is nonhelical region (NC4). Disulfide bonds link Cys44–Cys242 and Cys198–Cys252. One can recognise a Laminin G-like domain in the interval 50-244 (GQDDLPGFDL…LQWMLIHCDP (195 aa)). Asn171 carries an N-linked (GlcNAc...) asparagine glycan. 3 residues coordinate Zn(2+): Asp213, Asp215, and His253. 2 disordered regions span residues 254–759 (ELPA…APTD) and 783–905 (RPDS…EPAS). Collagen-like domains lie at 269–324 (GPPG…TPGA), 325–356 (DGLT…GFPG), 358–403 (GIPG…GTIG), 416–472 (PPGR…GLRG), 473–516 (ITGI…AGPK), 587–643 (EKGS…GKLG), 655–712 (GPPG…GEPG), and 713–755 (LRGP…PPGR). Residues 269 to 405 (GPPGEQGPPG…PGPRGTIGFH (137 aa)) are triple-helical region (COL3). Composition is skewed to pro residues over residues 273-285 (EQGP…PPGV) and 298-307 (KGPPGPPGPA). The span at 368 to 383 (TAGLPGELGRVGPVGD) shows a compositional bias: low complexity. A compositionally biased stretch (pro residues) spans 387–398 (RGPPGPPGPPGP). Residues 406-417 (DGDPLCPNACPP) are nonhelical region (NC3). The interval 418-756 (GRSGYPGLPG…PGVQGPPGRA (339 aa)) is triple-helical region (COL2). A compositionally biased stretch (basic and acidic residues) spans 479 to 489 (DKGEKGARGLD). Composition is skewed to low complexity over residues 602–621 (NSGK…RGPQ) and 630–650 (LGPV…SPGL). Residues 757–786 (PTDQHIKQVCMRVIQEHFAEMAASLKRPDS) are nonhelical region (NC2). The interval 787 to 901 (GATGLPGRPG…PGPPGLPGFC (115 aa)) is triple-helical region (COL1). 2 consecutive Collagen-like domains span residues 790-847 (GLPG…GPPG) and 848-899 (RGPN…GLPG). Over residues 794-804 (RPGPPGPPGPP) the composition is skewed to pro residues. Basic and acidic residues predominate over residues 833–845 (PKGDLGEKGERGP). Over residues 888 to 897 (VPGPPGPPGL) the composition is skewed to pro residues. The tract at residues 902–921 (EPASCTMQAGQRAFNKGPDP) is nonhelical region (NC1).

It belongs to the fibril-associated collagens with interrupted helices (FACIT) family. Heterotrimer of an alpha 1(IX), an alpha 2(IX) and an alpha 3(IX) chain. Covalently linked to the telopeptides of type II collagen by lysine-derived cross-links. In terms of processing, prolines at the third position of the tripeptide repeating unit (G-X-Y) are hydroxylated in some or all of the chains.

It is found in the secreted. Its subcellular location is the extracellular space. The protein localises to the extracellular matrix. Functionally, structural component of hyaline cartilage and vitreous of the eye. This is Collagen alpha-1(IX) chain (COL9A1) from Homo sapiens (Human).